A 199-amino-acid chain; its full sequence is CASP-like protein 1D2 (199 aa).

The disordered stretch occupies residues 1–27 (MASTENPDPETGKSEPIPASATPPPSS). At Ala-2 the chain carries N-acetylalanine. Topologically, residues 2–36 (ASTENPDPETGKSEPIPASATPPPSSAASFLDCRK) are cytoplasmic. Residues 37 to 57 (IDIITRVLLFSATLTALIVMV) form a helical membrane-spanning segment. Residues 58–85 (TSDQTEMTQLPGVSSPAPVSAEFNDSPA) lie on the Extracellular side of the membrane. A helical membrane pass occupies residues 86-106 (FIYFVVALVVASFYALISTLV). At 107-129 (SISLLLKPEFTAQFSIYLASLDM) the chain is on the cytoplasmic side. The chain crosses the membrane as a helical span at residues 130–150 (VMLGILASATGTAGGVAYIAL). Residues 151–171 (KGNEEVGWNKICNVYDKFCRY) are Extracellular-facing. Residues 172–192 (IATSLALSLFASLLLLVLSIW) traverse the membrane as a helical segment. The Cytoplasmic portion of the chain corresponds to 193–199 (SALSKRT).

The protein belongs to the Casparian strip membrane proteins (CASP) family. In terms of assembly, homodimer and heterodimers. In terms of tissue distribution, expressed in the root endodermis and flowers.

The protein resides in the cell membrane. In Arabidopsis thaliana (Mouse-ear cress), this protein is CASP-like protein 1D2.